A 759-amino-acid chain; its full sequence is Probable Na(+)/H(+) antiporter C3A11.09 (759 aa).

Helical transmembrane passes span 12–32, 36–56, 105–125, 133–153, 172–192, 206–226, 244–264, 295–315, 319–339, 361–381, and 415–435; these read HLAY…SLII, LFLG…PYVA, MLLP…YALI, SLAI…SIVG, ESGC…YLII, IIIL…GVIA, FLVF…IIGV, VIDL…MPWP, MPHM…ILIA, ALFA…CLVA, and VVCF…AFFM. Thr442 carries the post-translational modification Phosphothreonine. Ser446 bears the Phosphoserine mark. A Phosphothreonine modification is found at Thr448. Basic and acidic residues-rich tracts occupy residues 514–529, 537–547, 590–601, 622–647, and 655–671; these read LREE…HYDA, YESRQPRRSNE, IDEKLAQGDPKA, NLHE…ENHR, and SESH…RREQ. Disordered stretches follow at residues 514 to 558, 578 to 606, and 622 to 759; these read LREE…NPGD, SHTS…SFGR, and NLHE…RAWE. Positions 696-713 are enriched in polar residues; the sequence is NENNESSSDTRNGLLSDN. N-linked (GlcNAc...) asparagine glycans are attached at residues Asn699 and Asn713. The segment covering 724 to 733 has biased composition (low complexity); sequence RAPSAAVSSE. Ser735 carries the phosphoserine modification.

It belongs to the fungal Na(+)/H(+) exchanger family.

It localises to the membrane. Functionally, sodium export from cell, takes up external protons in exchange for internal sodium ions. This is Probable Na(+)/H(+) antiporter C3A11.09 (sod22) from Schizosaccharomyces pombe (strain 972 / ATCC 24843) (Fission yeast).